Reading from the N-terminus, the 332-residue chain is Transaldolase (332 aa).

The active-site Schiff-base intermediate with substrate is lysine 136.

Belongs to the transaldolase family. Type 1 subfamily.

It localises to the cytoplasm. It catalyses the reaction D-sedoheptulose 7-phosphate + D-glyceraldehyde 3-phosphate = D-erythrose 4-phosphate + beta-D-fructose 6-phosphate. The protein operates within carbohydrate degradation; pentose phosphate pathway; D-glyceraldehyde 3-phosphate and beta-D-fructose 6-phosphate from D-ribose 5-phosphate and D-xylulose 5-phosphate (non-oxidative stage): step 2/3. Its function is as follows. Transaldolase is important for the balance of metabolites in the pentose-phosphate pathway. The chain is Transaldolase from Trichormus variabilis (strain ATCC 29413 / PCC 7937) (Anabaena variabilis).